Consider the following 249-residue polypeptide: Syntaxin-10 (249 aa).

At Ser-2 the chain carries N-acetylserine. Over 2-228 (SLEDPFFVVR…VSHMTSDRRQ (227 aa)) the chain is Cytoplasmic. Positions 41 to 69 (EELDWTTNELRNGLRSIEWDLEDLEETIG) form a coiled coil. Ser-108 carries the phosphoserine modification. At Thr-110 the chain carries Phosphothreonine. Ser-134, Ser-140, and Ser-143 each carry phosphoserine. The region spanning 157–219 (QLIMDEQDQQ…DGVLRKLAKV (63 aa)) is the t-SNARE coiled-coil homology domain. Residues 229-249 (WCAIAVLVGVLLLVLILLFSL) traverse the membrane as a helical; Anchor for type IV membrane protein segment.

This sequence belongs to the syntaxin family. As to quaternary structure, interacts with VPS52. In terms of tissue distribution, expressed at high levels in heart, skeletal muscle and pancreas.

The protein resides in the golgi apparatus membrane. Its function is as follows. SNARE involved in vesicular transport from the late endosomes to the trans-Golgi network. In Homo sapiens (Human), this protein is Syntaxin-10 (STX10).